A 203-amino-acid chain; its full sequence is Proteasome subunit beta 1 (203 aa).

Positions 1-7 (MAEKLKG) are cleaved as a propeptide — removed in mature form; by autocatalysis. Thr-8 serves as the catalytic Nucleophile.

It belongs to the peptidase T1B family. The 20S proteasome core is composed of 14 alpha and 14 beta subunits that assemble into four stacked heptameric rings, resulting in a barrel-shaped structure. The two inner rings, each composed of seven catalytic beta subunits, are sandwiched by two outer rings, each composed of seven alpha subunits. The catalytic chamber with the active sites is on the inside of the barrel. Has a gated structure, the ends of the cylinder being occluded by the N-termini of the alpha-subunits. Is capped at one or both ends by the proteasome regulatory ATPase, PAN.

The protein resides in the cytoplasm. The catalysed reaction is Cleavage of peptide bonds with very broad specificity.. The formation of the proteasomal ATPase PAN-20S proteasome complex, via the docking of the C-termini of PAN into the intersubunit pockets in the alpha-rings, triggers opening of the gate for substrate entry. Interconversion between the open-gate and close-gate conformations leads to a dynamic regulation of the 20S proteasome proteolysis activity. Functionally, component of the proteasome core, a large protease complex with broad specificity involved in protein degradation. In Thermococcus onnurineus (strain NA1), this protein is Proteasome subunit beta 1.